The sequence spans 241 residues: Ribonuclease PH (241 aa).

Phosphate contacts are provided by residues Arg89 and 127-129; that span reads GTR.

Belongs to the RNase PH family. In terms of assembly, homohexameric ring arranged as a trimer of dimers.

It catalyses the reaction tRNA(n+1) + phosphate = tRNA(n) + a ribonucleoside 5'-diphosphate. In terms of biological role, phosphorolytic 3'-5' exoribonuclease that plays an important role in tRNA 3'-end maturation. Removes nucleotide residues following the 3'-CCA terminus of tRNAs; can also add nucleotides to the ends of RNA molecules by using nucleoside diphosphates as substrates, but this may not be physiologically important. Probably plays a role in initiation of 16S rRNA degradation (leading to ribosome degradation) during starvation. In Xylella fastidiosa (strain 9a5c), this protein is Ribonuclease PH.